The sequence spans 359 residues: Phosphoserine aminotransferase (359 aa).

Arg42 contacts L-glutamate. Pyridoxal 5'-phosphate contacts are provided by residues 76-77 (AS), Trp102, Thr152, Asp171, and Gln194. Lys195 is modified (N6-(pyridoxal phosphate)lysine). 236-237 (NT) lines the pyridoxal 5'-phosphate pocket.

This sequence belongs to the class-V pyridoxal-phosphate-dependent aminotransferase family. SerC subfamily. Homodimer. The cofactor is pyridoxal 5'-phosphate.

It localises to the cytoplasm. It carries out the reaction O-phospho-L-serine + 2-oxoglutarate = 3-phosphooxypyruvate + L-glutamate. The catalysed reaction is 4-(phosphooxy)-L-threonine + 2-oxoglutarate = (R)-3-hydroxy-2-oxo-4-phosphooxybutanoate + L-glutamate. It functions in the pathway amino-acid biosynthesis; L-serine biosynthesis; L-serine from 3-phospho-D-glycerate: step 2/3. It participates in cofactor biosynthesis; pyridoxine 5'-phosphate biosynthesis; pyridoxine 5'-phosphate from D-erythrose 4-phosphate: step 3/5. Its function is as follows. Catalyzes the reversible conversion of 3-phosphohydroxypyruvate to phosphoserine and of 3-hydroxy-2-oxo-4-phosphonooxybutanoate to phosphohydroxythreonine. In Vesicomyosocius okutanii subsp. Calyptogena okutanii (strain HA), this protein is Phosphoserine aminotransferase.